We begin with the raw amino-acid sequence, 151 residues long: MTGLERQLTEMLESAVVASGYELVGLEFIRAGEHSTLRIYIDHENGITVEDCAEVSHQVSAVLDVEDPISVAYSLEVSSPGLDRPLFKPAHYEQFIGQEVNVVLKMAVANRRKWKGEIHSVDGEAITLTVDGQQEEFALSNISKANLIPKF.

The protein belongs to the RimP family.

Its subcellular location is the cytoplasm. Its function is as follows. Required for maturation of 30S ribosomal subunits. In Vibrio vulnificus (strain CMCP6), this protein is Ribosome maturation factor RimP.